Consider the following 541-residue polypeptide: MAKTIAYDEEARRGLERGLNSLADAVKVTLGPKGRNVVLEKKWGAPTITNDGVSIAKEIELEDPYEKIGAELVKEVAKKTDDVAGDGTTTATVLAQALVKEGLRNVAAGANPLGLKRGIEKAVDKVTETLLKDAKEVETKEQIAATAAISAGDQSIGDLIAEAMDKVGNEGVITVEESNTFGLQLELTEGMRFDKGYISGYFVTDAERQEAVLEEPYILLVSSKVSTVKDLLPLLEKVIQAGKSLLIIAEDVEGEALSTLVVNKIRGTFKSVAVKAPGFGDRRKAMLQDMAILTGAQVISEEVGLTLENTDLSLLGKARKVVMTKDETTIVEGAGDTDAIAGRVAQIRTEIENSDSDYDREKLQERLAKLAGGVAVIKAGAATEVELKERKHRIEDAVRNAKAAVEEGIVAGGGVTLLQAAPALDKLKLTGDEATGANIVKVALEAPLKQIAFNSGMEPGVVAEKVRNLSVGHGLNAATGEYEDLLKAGVADPVKVTRSALQNAASIAGLFLTTEAVVADKPEKTAAPASDPTGGMGGMDF.

Residues 29-32 (TLGP), 86-90 (DGTTT), glycine 413, 476-478 (NAA), and aspartate 492 each bind ATP.

Belongs to the chaperonin (HSP60) family. Forms a cylinder of 14 subunits composed of two heptameric rings stacked back-to-back. Interacts with the co-chaperonin GroES.

Its subcellular location is the secreted. The protein resides in the capsule. It is found in the cell surface. It localises to the cell wall. The enzyme catalyses ATP + H2O + a folded polypeptide = ADP + phosphate + an unfolded polypeptide.. Its function is as follows. Together with its co-chaperonin GroES, plays an essential role in assisting protein folding. The GroEL-GroES system forms a nano-cage that allows encapsulation of the non-native substrate proteins and provides a physical environment optimized to promote and accelerate protein folding. The polypeptide is Chaperonin GroEL 2 (Mycobacterium leprae (strain TN)).